Reading from the N-terminus, the 622-residue chain is E3 ubiquitin-protein ligase RNF12-A (622 aa).

Disordered stretches follow at residues 1 to 26 (MESA…MDRL), 67 to 386 (RLQQ…ESER), and 473 to 514 (NANA…NSRG). Over residues 11 to 21 (SIEQSESQRQS) the composition is skewed to low complexity. Composition is skewed to polar residues over residues 110-138 (SVRQ…NPNS) and 147-163 (INVN…SLDQ). Residues 216 to 242 (RSPDQRRTRARTDRSRSPLHHAVDPPI) are compositionally biased toward basic and acidic residues. A compositionally biased stretch (polar residues) spans 247 to 256 (HSSSQTVDTS). The segment covering 272–289 (SSQVQNSSSSNETEGSSR) has biased composition (low complexity). Positions 300-317 (VLGTEGQSQSTVHLSNPE) are enriched in polar residues. The span at 318–331 (TRSSSQTPQTDSST) shows a compositional bias: low complexity. Positions 332-341 (NAETTGTGQR) are enriched in polar residues. Basic and acidic residues predominate over residues 355–365 (RPGDYRQRDSI). Polar residues predominate over residues 366–382 (ANRTRSRSQTPNNTVTY). The segment at 568–609 (CSVCITEYTEGNKLRKLPCSHEYHIHCIDRWLSENSTCPICR) adopts an RING-type; atypical zinc-finger fold. The PDZ-binding signature appears at 619–622 (ESIV).

The protein belongs to the RNF12 family. In terms of assembly, forms homodimers through the C-terminal region. The N-terminus interacts with the homeobox of LIM/homeobox factor lhx1/lim1, with lhx3/lim3 and lhx5/lim5, and with the N-terminus of ldb1. Shows overlapping expression with lhx1/lim1 and ldb1 in the gastrula mesoderm, and expression overlaps with ldb1 throughout early embryogenesis. After gastrulation, expression is gradually restricted to tissues originated from the ectoderm, the neuroectoderm, neural crest and epidermis, and subsequently to the neural tube as well as the head and tailbud region.

The protein localises to the nucleus. It catalyses the reaction S-ubiquitinyl-[E2 ubiquitin-conjugating enzyme]-L-cysteine + [acceptor protein]-L-lysine = [E2 ubiquitin-conjugating enzyme]-L-cysteine + N(6)-ubiquitinyl-[acceptor protein]-L-lysine.. It participates in protein modification; protein ubiquitination. In terms of biological role, acts as an E3 ubiquitin-protein ligase specific for ldb1, mediating ubiquitination and proteasome-dependent degradation of excess ldb1 in a RING-dependent manner. Does not degrade ldb1 bound to lhx1/lim1, nor lim1 itself and thus contributes to the establishment of proper ldb1-lhx1/lim1 stoichiometry and the formation of a ldb1-lhx1/lim1 complex. Interferes with Spemann organizer function and suppresses secondary axis formation induced by ldb1 and lhx1/lim1. This chain is E3 ubiquitin-protein ligase RNF12-A (rnf12-a), found in Xenopus laevis (African clawed frog).